Here is a 593-residue protein sequence, read N- to C-terminus: Probable metalloprotease ARX1 (593 aa).

It belongs to the peptidase M24 family. As to quaternary structure, component of the nucleoplasmic and cytoplasmic pre-60S ribosomal particles. Interacts directly with REI1.

The protein localises to the cytoplasm. It is found in the nucleus. Functionally, probable metalloprotease involved in proper assembly of pre-ribosomal particles during the biogenesis of the 60S ribosomal subunit. Accompanies the pre-60S particles to the cytoplasm. The chain is Probable metalloprotease ARX1 (ARX1) from Saccharomyces cerevisiae (strain ATCC 204508 / S288c) (Baker's yeast).